A 148-amino-acid chain; its full sequence is NADH-quinone oxidoreductase subunit C (148 aa).

The protein belongs to the complex I 30 kDa subunit family. As to quaternary structure, NDH-1 is composed of 14 different subunits. Subunits NuoB, C, D, E, F, and G constitute the peripheral sector of the complex.

Its subcellular location is the cell membrane. The enzyme catalyses a quinone + NADH + 5 H(+)(in) = a quinol + NAD(+) + 4 H(+)(out). NDH-1 shuttles electrons from NADH, via FMN and iron-sulfur (Fe-S) centers, to quinones in the respiratory chain. The immediate electron acceptor for the enzyme in this species is believed to be a menaquinone. Couples the redox reaction to proton translocation (for every two electrons transferred, four hydrogen ions are translocated across the cytoplasmic membrane), and thus conserves the redox energy in a proton gradient. This Moorella thermoacetica (strain ATCC 39073 / JCM 9320) protein is NADH-quinone oxidoreductase subunit C.